The following is a 180-amino-acid chain: CASP-like protein XL3 (180 aa).

At methionine 1–lysine 7 the chain is on the cytoplasmic side. A helical membrane pass occupies residues isoleucine 8–glycine 28. At leucine 29–arginine 49 the chain is on the extracellular side. A helical transmembrane segment spans residues alanine 50 to cysteine 70. The Cytoplasmic portion of the chain corresponds to cysteine 71 to glutamine 98. Residues alanine 99–leucine 119 traverse the membrane as a helical segment. Residues threonine 120–glutamine 140 lie on the Extracellular side of the membrane. The chain crosses the membrane as a helical span at residues isoleucine 141–isoleucine 161. The Cytoplasmic portion of the chain corresponds to serine 162–leucine 180.

It belongs to the Casparian strip membrane proteins (CASP) family. As to quaternary structure, homodimer and heterodimers.

It localises to the cell membrane. The protein is CASP-like protein XL3 (XL3) of Gossypium hirsutum (Upland cotton).